Reading from the N-terminus, the 119-residue chain is Large ribosomal subunit protein bL20 (119 aa).

It belongs to the bacterial ribosomal protein bL20 family.

Its function is as follows. Binds directly to 23S ribosomal RNA and is necessary for the in vitro assembly process of the 50S ribosomal subunit. It is not involved in the protein synthesizing functions of that subunit. The polypeptide is Large ribosomal subunit protein bL20 (Clostridium acetobutylicum (strain ATCC 824 / DSM 792 / JCM 1419 / IAM 19013 / LMG 5710 / NBRC 13948 / NRRL B-527 / VKM B-1787 / 2291 / W)).